The chain runs to 121 residues: Ragulator complex protein LAMTOR4 homolog (121 aa).

A disordered region spans residues 91–121 (TQNGATTSSSSSTSYNDAAEGNNISSSTVLA). Polar residues predominate over residues 112-121 (NNISSSTVLA).

Belongs to the LAMTOR4 family. Part of the Ragulator complex.

The protein resides in the lysosome. In terms of biological role, regulator of the TOR pathway, a signaling cascade that promotes cell growth in response to growth factors, energy levels, and amino acids. As part of the Ragulator complex, may activate the TOR signaling cascade in response to amino acids. In Drosophila pseudoobscura pseudoobscura (Fruit fly), this protein is Ragulator complex protein LAMTOR4 homolog.